Here is a 370-residue protein sequence, read N- to C-terminus: L-lactate oxidase (370 aa).

One can recognise an FMN hydroxy acid dehydrogenase domain in the interval 8–367; it reads DPDGMPVTLS…TPDLLTGFSG (360 aa). A pyruvate-binding site is contributed by Tyr34. Residues 87 to 89, Ser116, and Gln136 each bind FMN; that span reads PMA. Tyr138 is a pyruvate binding site. Thr164 contributes to the FMN binding site. Arg173 contacts pyruvate. Residues Lys238 and Ser260 each contribute to the FMN site. The pyruvate site is built by His262 and Arg265. His262 serves as the catalytic Proton acceptor. FMN contacts are provided by residues 293 to 297 and Arg317; that span reads DGGIR.

It belongs to the FMN-dependent alpha-hydroxy acid dehydrogenase family. In terms of assembly, homotetramer. FMN serves as cofactor.

It catalyses the reaction (S)-lactate + O2 = pyruvate + H2O2. The enzyme catalyses a (2S)-2-hydroxycarboxylate + O2 = a 2-oxocarboxylate + H2O2. The catalysed reaction is glycolate + O2 = glyoxylate + H2O2. It carries out the reaction 2-hydroxyoctadecanoate + O2 = 2-oxooctadecanoate + H2O2. Catalyzes the oxidation of (S)-lactate (L-lactate) to pyruvate, with a reduction of O2 to H2O2. Is also able to use glycolate and to a lesser extent 2-hydroxyoctadecanoate as substrate. This is L-lactate oxidase from Roseobacter sp. (strain GAI101).